A 105-amino-acid chain; its full sequence is Large ribosomal subunit protein bL21c (105 aa).

The protein belongs to the bacterial ribosomal protein bL21 family. Part of the 50S ribosomal subunit.

The protein resides in the plastid. The protein localises to the chloroplast. Its function is as follows. This protein binds to 23S rRNA. The chain is Large ribosomal subunit protein bL21c from Trieres chinensis (Marine centric diatom).